The sequence spans 121 residues: U15-barytoxin-Tl1b (121 aa).

An N-terminal signal peptide occupies residues 1–16; that stretch reads MKLFMVLVASFAFAVA. Disulfide bonds link Cys54-Cys72, Cys65-Cys78, Cys69-Cys119, and Cys71-Cys90.

The protein belongs to the neurotoxin 03 (Tx2) family. 03 subfamily. Expressed by the venom gland.

It is found in the secreted. Functionally, ion channel inhibitor. The protein is U15-barytoxin-Tl1b of Trittame loki (Brush-footed trapdoor spider).